The sequence spans 538 residues: CWF19-like protein 1 (538 aa).

The disordered stretch occupies residues 298 to 324 (QGRKRSSTGRDSKSSPHPKQPRKPPQP).

Belongs to the CWF19 family. Expressed in many brain regions, including cerebellum, thalamus and occipital, parietal and temporal lobes (at protein level). Also expressed in the spinal cord (at protein level).

This Homo sapiens (Human) protein is CWF19-like protein 1 (CWF19L1).